The chain runs to 223 residues: Ubiquitin-conjugating enzyme E2 S-A (223 aa).

The UBC core domain maps to 11-157 (HIIRLVYKEV…ARLLTEIHGG (147 aa)). The Glycyl thioester intermediate role is filled by Cys-95. Residues 170–223 (QDLASGASASSADPMIPGVLGGAEGPMAKKHAGERDKKLAAKKKLDKKRALRRL) are disordered. Positions 209–223 (AAKKKLDKKRALRRL) are enriched in basic residues.

It belongs to the ubiquitin-conjugating enzyme family.

The enzyme catalyses S-ubiquitinyl-[E1 ubiquitin-activating enzyme]-L-cysteine + [E2 ubiquitin-conjugating enzyme]-L-cysteine = [E1 ubiquitin-activating enzyme]-L-cysteine + S-ubiquitinyl-[E2 ubiquitin-conjugating enzyme]-L-cysteine.. It functions in the pathway protein modification; protein ubiquitination. Functionally, catalyzes the covalent attachment of ubiquitin to other proteins. Acts as an essential factor of the anaphase promoting complex/cyclosome (APC/C), a cell cycle-regulated ubiquitin ligase that controls progression through mitosis. Acts by specifically elongating 'Lys-11'-linked polyubiquitin chains initiated by the E2 enzyme ube2c/ubch10 on APC/C substrates, enhancing the degradation of APC/C substrates by the proteasome and promoting mitotic exit. In Xenopus laevis (African clawed frog), this protein is Ubiquitin-conjugating enzyme E2 S-A (ube2s-a).